A 204-amino-acid chain; its full sequence is ATP-dependent Clp protease proteolytic subunit 1 (204 aa).

The active-site Nucleophile is the serine 97. Residue histidine 122 is part of the active site.

This sequence belongs to the peptidase S14 family. As to quaternary structure, fourteen ClpP subunits assemble into 2 heptameric rings which stack back to back to give a disk-like structure with a central cavity, resembling the structure of eukaryotic proteasomes.

The protein resides in the cytoplasm. It catalyses the reaction Hydrolysis of proteins to small peptides in the presence of ATP and magnesium. alpha-casein is the usual test substrate. In the absence of ATP, only oligopeptides shorter than five residues are hydrolyzed (such as succinyl-Leu-Tyr-|-NHMec, and Leu-Tyr-Leu-|-Tyr-Trp, in which cleavage of the -Tyr-|-Leu- and -Tyr-|-Trp bonds also occurs).. Cleaves peptides in various proteins in a process that requires ATP hydrolysis. Has a chymotrypsin-like activity. Plays a major role in the degradation of misfolded proteins. The polypeptide is ATP-dependent Clp protease proteolytic subunit 1 (Trichormus variabilis (strain ATCC 29413 / PCC 7937) (Anabaena variabilis)).